The chain runs to 284 residues: Tryptophan 2,3-dioxygenase (284 aa).

Substrate-binding positions include 53–57 (FIVQH), Tyr115, and Arg119. His242 provides a ligand contact to heme. Residue Thr256 coordinates substrate.

It belongs to the tryptophan 2,3-dioxygenase family. Homotetramer. Requires heme as cofactor.

The catalysed reaction is L-tryptophan + O2 = N-formyl-L-kynurenine. The protein operates within amino-acid degradation; L-tryptophan degradation via kynurenine pathway; L-kynurenine from L-tryptophan: step 1/2. Its function is as follows. Heme-dependent dioxygenase that catalyzes the oxidative cleavage of the L-tryptophan (L-Trp) pyrrole ring and converts L-tryptophan to N-formyl-L-kynurenine. Catalyzes the oxidative cleavage of the indole moiety. This chain is Tryptophan 2,3-dioxygenase, found in Bordetella parapertussis (strain 12822 / ATCC BAA-587 / NCTC 13253).